We begin with the raw amino-acid sequence, 307 residues long: Nucleotide-binding protein Acid345_3782 (307 aa).

31–38 lines the ATP pocket; that stretch reads GLSGSGKA. 81-84 is a binding site for GTP; it reads DIRE.

It belongs to the RapZ-like family.

Functionally, displays ATPase and GTPase activities. This Koribacter versatilis (strain Ellin345) protein is Nucleotide-binding protein Acid345_3782.